The following is a 502-amino-acid chain: Mannitol 2-dehydrogenase (502 aa).

37–48 (IVHIGVGGFHRA) contacts NAD(+).

The protein belongs to the mannitol dehydrogenase family. As to quaternary structure, monomer.

It carries out the reaction D-mannitol + NAD(+) = D-fructose + NADH + H(+). Functionally, catalyzes the NAD(H)-dependent interconversion of D-fructose and D-mannitol in the mannitol metabolic pathway. This chain is Mannitol 2-dehydrogenase, found in Emericella nidulans (strain FGSC A4 / ATCC 38163 / CBS 112.46 / NRRL 194 / M139) (Aspergillus nidulans).